Here is a 125-residue protein sequence, read N- to C-terminus: Short coiled-coil protein (125 aa).

The interval 1–31 (MSKMDGLSTGEEEDSTFTSISLEDDTDHSLK) is disordered. Positions 43 to 101 (KMMNADMDAVDAENQVELEEKTRLINQVLELQHTLEDLSARVDAVKEENLKLKSENQVL) form a coiled coil.

This sequence belongs to the SCOC family. As to quaternary structure, homodimer. Interacts with ARL1, ARL2 and ARL3. Directly interacts with FEZ1 and UVRAG. The interaction with UVRAG is reduced by amino acid starvation, but the complex is stabilized in the presence of FEZ1. Interacts with NRBF2.

The protein localises to the golgi apparatus membrane. The protein resides in the golgi apparatus. Its subcellular location is the trans-Golgi network. It localises to the cytoplasm. It is found in the cytosol. In terms of biological role, positive regulator of amino acid starvation-induced autophagy. The chain is Short coiled-coil protein (Scoc) from Mus musculus (Mouse).